The primary structure comprises 160 residues: Twist-related protein 2 (160 aa).

Positions 1 to 63 (MEEGSSSPVS…GSPSAQSFEE (63 aa)) are disordered. The span at 27 to 37 (KRFGRKRRYSK) shows a compositional bias: basic residues. Residues 66–117 (SQRILANVRERQRTQSLNEAFAALRKIIPTLPSDKLSKIQTLKLAARYIDFL) enclose the bHLH domain.

As to quaternary structure, efficient DNA binding requires dimerization with another bHLH protein. Forms a heterodimer with TCF3/E12. Also interacts with MEF2C. As to expression, in the embryo, highly expressed in chondrogenic cells. In embryonic skin, expressed in the undifferentiated mesenchymal layer beneath the epidermis which later develops into the dermis. Expressed in early myeloid cells but not in lymphoid cells in the liver. Expression also detected in the secretory ependymal epithelium of the choroid plexus primordium. In the adult, expressed in secreting glandular tissues and tubules.

The protein resides in the nucleus. The protein localises to the cytoplasm. Binds to the E-box consensus sequence 5'-CANNTG-3' as a heterodimer and inhibits transcriptional activation by MYOD1, MYOG, MEF2A and MEF2C. Also represses expression of pro-inflammatory cytokines such as TNFA and IL1B. Involved in postnatal glycogen storage and energy metabolism. Inhibits the premature or ectopic differentiation of preosteoblast cells during osteogenesis, possibly by changing the internal signal transduction response of osteoblasts to external growth factors. This is Twist-related protein 2 (TWIST2) from Homo sapiens (Human).